We begin with the raw amino-acid sequence, 1221 residues long: Fibulin-2 (1221 aa).

An N-terminal signal peptide occupies residues 1–26; that stretch reads MLLQESAGVWLALALVTALTPSPSMA. The segment at 27 to 176 is subdomain NA (Cys-rich); the sequence is VPWQDCTGAE…ELICYQLPGC (150 aa). The n stretch occupies residues 27–434; sequence VPWQDCTGAE…DGSTKDLIET (408 aa). The interval 177 to 434 is subdomain NB (Cys-free); it reads HGNFSDAEEG…DGSTKDLIET (258 aa). Asn-179 carries an N-linked (GlcNAc...) asparagine glycan. 2 disordered regions span residues 248–329 and 341–399; these read PTAA…LIPD and GAAP…PQHP. The span at 270–283 shows a compositional bias: acidic residues; it reads DTEEDEEEEEEETL. Positions 312–322 are enriched in basic and acidic residues; sequence QEKEAEAKAGP. Residues 421–423 carry the Cell attachment site motif; sequence RGD. 11 cysteine pairs are disulfide-bonded: Cys-435–Cys-462, Cys-436–Cys-469, Cys-449–Cys-470, Cys-479–Cys-508, Cys-492–Cys-509, Cys-511–Cys-535, Cys-512–Cys-542, Cys-525–Cys-543, Cys-598–Cys-610, Cys-606–Cys-619, and Cys-621–Cys-634. 3 Anaphylatoxin-like domains span residues 435–477, 478–510, and 511–543; these read CCAA…LKEK, SCVA…QCCD, and CCGL…LSCC. Asn-497 carries N-linked (GlcNAc...) asparagine glycosylation. The EGF-like 1; calcium-binding domain occupies 594-635; sequence DQDECLMLPGELCQHLCINTVGSYRCACFPGFELQGDGRTCR. Positions 633–661 are disordered; the sequence is TCRPDRGAPQLDTARESAPRSESAQVSPN. A compositionally biased stretch (polar residues) spans 652–661; the sequence is RSESAQVSPN. The EGF-like 2 domain occupies 669-708; that stretch reads QPNTCKDNGPCRQVCRVVGDTAMCSCFPGYAIMADGVSCE. 5 disulfides stabilise this stretch: Cys-673/Cys-683, Cys-679/Cys-692, Cys-694/Cys-707, Cys-713/Cys-726, and Cys-720/Cys-735. Positions 709–755 constitute an EGF-like 3; calcium-binding domain; the sequence is DQDECLMGTHDCSWKQFCVNTLGSFYCVNHTVLCAEGYILNAHRKCV. The N-linked (GlcNAc...) asparagine glycan is linked to Asn-737. Cys-742 and Cys-754 form a disulfide bridge. One can recognise an EGF-like 4; calcium-binding domain in the interval 756–800; that stretch reads DINECVTDLHTCTRAEHCVNTPGSFQCYKALTCEPGYVLTDGECT. Residues 801–846 enclose the EGF-like 5; calcium-binding domain; sequence DVDECVTGTHNCQAGFSCQNTKGSFYCQARQRCMDGFLQDPEGNCV. 3 disulfides stabilise this stretch: Cys-805–Cys-818, Cys-812–Cys-827, and Cys-833–Cys-845. Residues 847-894 form the EGF-like 6; calcium-binding domain; the sequence is DINECTSLLEPCRSGFSCINTVGSYTCQRNPLVCGRGYHANEEGSECV. The EGF-like 7; calcium-binding domain maps to 895–937; sequence DVNECETGVHRCGEGQLCYNLPGSYRCDCKPGFQRDAFGRTCI. 15 disulfide bridges follow: Cys-899–Cys-912, Cys-906–Cys-921, Cys-923–Cys-936, Cys-942–Cys-954, Cys-950–Cys-963, Cys-965–Cys-978, Cys-984–Cys-993, Cys-989–Cys-1002, Cys-1004–Cys-1017, Cys-1023–Cys-1035, Cys-1031–Cys-1044, Cys-1046–Cys-1060, Cys-1066–Cys-1079, Cys-1073–Cys-1088, and Cys-1093–Cys-1105. In terms of domain architecture, EGF-like 8; calcium-binding spans 938 to 979; that stretch reads DVNECWVSPGRLCQHTCENTPGSYRCSCAAGFLLAADGKHCE. The 39-residue stretch at 980 to 1018 folds into the EGF-like 9; calcium-binding domain; that stretch reads DVNECETRRCSQECANIYGSYQCYCRQGYQLAEDGHTCT. The EGF-like 10; calcium-binding domain maps to 1019-1061; the sequence is DIDECAQGAGILCTFRCVNVPGSYQCACPEQGYTMMANGRSCK. An EGF-like 11; calcium-binding domain is found at 1062 to 1106; sequence DLDECALGTHNCSEAETCHNIQGSFRCLRFDCPPNYVRVSETKCE. A glycan (N-linked (GlcNAc...) asparagine) is linked at Asn-1072. Residues 1111-1221 form a domain III region; that stretch reads QDITECQTSP…MYIFFTTFAP (111 aa).

The protein belongs to the fibulin family. In terms of assembly, homotrimer; disulfide-linked. Interacts with LAMA2. Interacts with FBN1 (via N-terminal domain). Forms a ternary complex with ELN and FBN1. As to expression, component of both basement membranes and other connective tissues.

It localises to the secreted. The protein localises to the extracellular space. It is found in the extracellular matrix. In terms of biological role, its binding to fibronectin and some other ligands is calcium dependent. May act as an adapter that mediates the interaction between FBN1 and ELN. In Mus musculus (Mouse), this protein is Fibulin-2 (Fbln2).